Reading from the N-terminus, the 365-residue chain is Bifunctional chorismate mutase/prephenate dehydratase (365 aa).

The Chorismate mutase domain maps to 1–96; that stretch reads MSEADQLKAL…SCLALEQPLR (96 aa). 4 residues coordinate substrate: arginine 11, arginine 28, lysine 39, and glutamate 57. Residues 97-272 form the Prephenate dehydratase domain; it reads VAYLGPEGTF…NSTRFLIIGS (176 aa). Residues 284–361 form the ACT domain; that stretch reads SIIVSMRNKP…VALKVLGSYP (78 aa).

It is found in the cytoplasm. The catalysed reaction is chorismate = prephenate. It carries out the reaction prephenate + H(+) = 3-phenylpyruvate + CO2 + H2O. It functions in the pathway amino-acid biosynthesis; L-phenylalanine biosynthesis; phenylpyruvate from prephenate: step 1/1. Its pathway is metabolic intermediate biosynthesis; prephenate biosynthesis; prephenate from chorismate: step 1/1. Its function is as follows. Catalyzes the Claisen rearrangement of chorismate to prephenate and the decarboxylation/dehydration of prephenate to phenylpyruvate. The polypeptide is Bifunctional chorismate mutase/prephenate dehydratase (Stutzerimonas stutzeri (Pseudomonas stutzeri)).